Consider the following 896-residue polypeptide: Protein translocase subunit SecA (896 aa).

ATP-binding positions include Q87, 105 to 109 (GEGKT), and D512. Disordered regions lie at residues 565–584 (RRID…PGSS) and 840–896 (EAAQ…AHEA). The Zn(2+) site is built by C876, C878, C887, and H888. Positions 882–896 (KKYKHCHGNRAAHEA) are enriched in basic residues.

It belongs to the SecA family. In terms of assembly, monomer and homodimer. Part of the essential Sec protein translocation apparatus which comprises SecA, SecYEG and auxiliary proteins SecDF-YajC and YidC. Requires Zn(2+) as cofactor.

The protein resides in the cell inner membrane. Its subcellular location is the cytoplasm. It catalyses the reaction ATP + H2O + cellular proteinSide 1 = ADP + phosphate + cellular proteinSide 2.. In terms of biological role, part of the Sec protein translocase complex. Interacts with the SecYEG preprotein conducting channel. Has a central role in coupling the hydrolysis of ATP to the transfer of proteins into and across the cell membrane, serving both as a receptor for the preprotein-SecB complex and as an ATP-driven molecular motor driving the stepwise translocation of polypeptide chains across the membrane. In Mannheimia succiniciproducens (strain KCTC 0769BP / MBEL55E), this protein is Protein translocase subunit SecA.